The sequence spans 397 residues: Succinate--CoA ligase [ADP-forming] subunit beta (397 aa).

The ATP-grasp domain maps to 9 to 254 (KALLRQYGAP…ETEEDPKELA (246 aa)). ATP contacts are provided by residues Lys46, 53–55 (GRG), Glu109, Ser112, and Glu117. Mg(2+) contacts are provided by Asn209 and Asp223. Substrate is bound by residues Asn274 and 331–333 (GIM).

The protein belongs to the succinate/malate CoA ligase beta subunit family. In terms of assembly, heterotetramer of two alpha and two beta subunits. Requires Mg(2+) as cofactor.

It carries out the reaction succinate + ATP + CoA = succinyl-CoA + ADP + phosphate. The enzyme catalyses GTP + succinate + CoA = succinyl-CoA + GDP + phosphate. Its pathway is carbohydrate metabolism; tricarboxylic acid cycle; succinate from succinyl-CoA (ligase route): step 1/1. In terms of biological role, succinyl-CoA synthetase functions in the citric acid cycle (TCA), coupling the hydrolysis of succinyl-CoA to the synthesis of either ATP or GTP and thus represents the only step of substrate-level phosphorylation in the TCA. The beta subunit provides nucleotide specificity of the enzyme and binds the substrate succinate, while the binding sites for coenzyme A and phosphate are found in the alpha subunit. This Paracoccus denitrificans (strain Pd 1222) protein is Succinate--CoA ligase [ADP-forming] subunit beta.